A 215-amino-acid polypeptide reads, in one-letter code: DNA polymerase III subunit epsilon (215 aa).

Positions 19 and 21 each coordinate a divalent metal cation. Substrate is bound by residues aspartate 19, glutamate 21, aspartate 62, and asparagine 67. Catalysis depends on histidine 160, which acts as the Proton acceptor. An a divalent metal cation-binding site is contributed by aspartate 165. Aspartate 165 contacts substrate.

As to quaternary structure, DNA polymerase III contains a core (composed of alpha, epsilon and theta chains) that associates with a tau subunit. This core dimerizes to form the POLIII' complex. PolIII' associates with the gamma complex (composed of gamma, delta, delta', psi and chi chains) and with the beta chain to form the complete DNA polymerase III complex. Mg(2+) is required as a cofactor. It depends on Mn(2+) as a cofactor.

The catalysed reaction is DNA(n) + a 2'-deoxyribonucleoside 5'-triphosphate = DNA(n+1) + diphosphate. In terms of biological role, DNA polymerase III is a complex, multichain enzyme responsible for most of the replicative synthesis in bacteria. The epsilon subunit contain the editing function and is a proofreading 3'-5' exonuclease. This is DNA polymerase III subunit epsilon (dnaQ) from Treponema pallidum (strain Nichols).